A 416-amino-acid chain; its full sequence is Homeobox even-skipped homolog protein 1 (416 aa).

2 disordered regions span residues 30–120 and 138–178; these read AVSS…SDFY and YQHS…LACS. Positions 72–82 are enriched in low complexity; the sequence is GLAGSAAGLGA. Residues 102 to 114 show a composition bias toward polar residues; that stretch reads DSLSGQGQPSSSD. Positions 183 to 242 form a DNA-binding region, homeobox; it reads MRRYRTAFTREQIARLEKEFYRENYVSRPRRCELAAALNLPETTIKVWFQNRRMKDKRQR.

The protein belongs to the even-skipped homeobox family.

It localises to the nucleus. Functionally, may play a role in the specification of neuronal cell types. May play a role in the dorsoventral specification of mesodermal cell fate. This Mus musculus (Mouse) protein is Homeobox even-skipped homolog protein 1 (Evx1).